Here is a 329-residue protein sequence, read N- to C-terminus: Pantothenate kinase (329 aa).

The tract at residues 1 to 22 (MPAQGPSHGELPPADAGRESSP) is disordered. 107–114 (GSVAVGKS) serves as a coordination point for ATP.

This sequence belongs to the prokaryotic pantothenate kinase family.

It is found in the cytoplasm. The enzyme catalyses (R)-pantothenate + ATP = (R)-4'-phosphopantothenate + ADP + H(+). Its pathway is cofactor biosynthesis; coenzyme A biosynthesis; CoA from (R)-pantothenate: step 1/5. This Nocardioides sp. (strain ATCC BAA-499 / JS614) protein is Pantothenate kinase.